A 158-amino-acid chain; its full sequence is NAD(P)H-quinone oxidoreductase subunit J, chloroplastic (158 aa).

It belongs to the complex I 30 kDa subunit family. As to quaternary structure, NDH is composed of at least 16 different subunits, 5 of which are encoded in the nucleus.

It is found in the plastid. The protein localises to the chloroplast thylakoid membrane. The catalysed reaction is a plastoquinone + NADH + (n+1) H(+)(in) = a plastoquinol + NAD(+) + n H(+)(out). It carries out the reaction a plastoquinone + NADPH + (n+1) H(+)(in) = a plastoquinol + NADP(+) + n H(+)(out). In terms of biological role, NDH shuttles electrons from NAD(P)H:plastoquinone, via FMN and iron-sulfur (Fe-S) centers, to quinones in the photosynthetic chain and possibly in a chloroplast respiratory chain. The immediate electron acceptor for the enzyme in this species is believed to be plastoquinone. Couples the redox reaction to proton translocation, and thus conserves the redox energy in a proton gradient. The sequence is that of NAD(P)H-quinone oxidoreductase subunit J, chloroplastic from Solanum tuberosum (Potato).